We begin with the raw amino-acid sequence, 314 residues long: MIKPQIWFAGTPEFATAALDALVKHVSVAGVLTQPDRPAGRGRKLKASAVKARAEHYQLPIAQPERLQESAPPFAHLPRPDIVVVVAYGLLLPQWFLDYPRLGCINIHASLLPRWRGAAPIQRAIEAGDEETGISIMQMDAGLDTGAVWLEKRLPIGEQSASQLHDALMQLGAEALIDVLPDILAQARAPIPQPSSGACYAHKLSKAEAEINWQDDAANIVRKIRAFDLFPVAYSYLDDAPVRFYDGIALSEHTESAPAGTVIEHNQEGIDIVCGSGILRIKRLQLAGKNVVSAAALANGCHLKGRHFARKNQL.

A (6S)-5,6,7,8-tetrahydrofolate-binding site is contributed by 110-113 (SLLP).

This sequence belongs to the Fmt family.

The enzyme catalyses L-methionyl-tRNA(fMet) + (6R)-10-formyltetrahydrofolate = N-formyl-L-methionyl-tRNA(fMet) + (6S)-5,6,7,8-tetrahydrofolate + H(+). Functionally, attaches a formyl group to the free amino group of methionyl-tRNA(fMet). The formyl group appears to play a dual role in the initiator identity of N-formylmethionyl-tRNA by promoting its recognition by IF2 and preventing the misappropriation of this tRNA by the elongation apparatus. In Dichelobacter nodosus (strain VCS1703A), this protein is Methionyl-tRNA formyltransferase.